We begin with the raw amino-acid sequence, 499 residues long: Probable malate:quinone oxidoreductase (499 aa).

This sequence belongs to the MQO family. FAD is required as a cofactor.

The catalysed reaction is (S)-malate + a quinone = a quinol + oxaloacetate. The protein operates within carbohydrate metabolism; tricarboxylic acid cycle; oxaloacetate from (S)-malate (quinone route): step 1/1. This Exiguobacterium sp. (strain ATCC BAA-1283 / AT1b) protein is Probable malate:quinone oxidoreductase.